A 544-amino-acid chain; its full sequence is Chaperonin GroEL (544 aa).

ATP-binding positions include 30–33 (TLGP), Lys-51, 87–91 (DGTTT), Gly-415, and Asp-495.

Belongs to the chaperonin (HSP60) family. In terms of assembly, forms a cylinder of 14 subunits composed of two heptameric rings stacked back-to-back. Interacts with the co-chaperonin GroES.

The protein resides in the cytoplasm. The enzyme catalyses ATP + H2O + a folded polypeptide = ADP + phosphate + an unfolded polypeptide.. Its function is as follows. Together with its co-chaperonin GroES, plays an essential role in assisting protein folding. The GroEL-GroES system forms a nano-cage that allows encapsulation of the non-native substrate proteins and provides a physical environment optimized to promote and accelerate protein folding. This Bartonella bacilliformis protein is Chaperonin GroEL.